The sequence spans 265 residues: Mycothiol acetyltransferase (265 aa).

2 consecutive N-acetyltransferase domains span residues 1 to 110 and 118 to 265; these read MDDL…PPLP and VSVR…YVRG. Residue Asp-3 coordinates 1D-myo-inositol 2-(L-cysteinylamino)-2-deoxy-alpha-D-glucopyranoside. 44 to 46 serves as a coordination point for acetyl-CoA; that stretch reads VQV. 3 residues coordinate 1D-myo-inositol 2-(L-cysteinylamino)-2-deoxy-alpha-D-glucopyranoside: Glu-145, Arg-185, and Glu-198. Acetyl-CoA is bound by residues 202–204 and 209–215; these read LGV and HCKGLGK. Tyr-236 is a 1D-myo-inositol 2-(L-cysteinylamino)-2-deoxy-alpha-D-glucopyranoside binding site.

It belongs to the acetyltransferase family. MshD subfamily. In terms of assembly, monomer.

It carries out the reaction 1D-myo-inositol 2-(L-cysteinylamino)-2-deoxy-alpha-D-glucopyranoside + acetyl-CoA = mycothiol + CoA + H(+). In terms of biological role, catalyzes the transfer of acetyl from acetyl-CoA to desacetylmycothiol (Cys-GlcN-Ins) to form mycothiol. The sequence is that of Mycothiol acetyltransferase from Segniliparus rotundus (strain ATCC BAA-972 / CDC 1076 / CIP 108378 / DSM 44985 / JCM 13578).